Here is an 89-residue protein sequence, read N- to C-terminus: MQPCVLWWLALGLLLGIPAGAKPTPEEADPNAQPPAMPYWPFSTSDFWNYVQYFQSQGAYPQIEDMARTFFAHFPLGSTLGFHVPYQED.

The first 21 residues, 1–21 (MQPCVLWWLALGLLLGIPAGA), serve as a signal peptide directing secretion.

The protein belongs to the otospiralin family. In terms of tissue distribution, ear specific. Expressed in the cochlea and vestibule, but not in the cochlear nerve, cochlear nucleus, spinal chord, muscle, cerebral cortex, cerebellum, diencephalon and olfactory bulb. In the cochlea, expressed in fibrocytes of the spiral limbus, spiral ligament and suprastrial zone. In the vestibule, expressed in cells located to the stroma below the macular and crista sensory epithelia and in the subepithelial layer of the walls of semicircular canals and maculae.

It localises to the secreted. Functionally, may be essential for the survival of the neurosensory epithelium of the inner ear. This Rattus norvegicus (Rat) protein is Otospiralin (Otos).